The chain runs to 309 residues: Homoserine O-succinyltransferase (309 aa).

Cys-142 serves as the catalytic Acyl-thioester intermediate. Substrate is bound by residues Lys-163 and Ser-192. The active-site Proton acceptor is His-235. Glu-237 is a catalytic residue. Arg-249 contacts substrate.

It belongs to the MetA family.

Its subcellular location is the cytoplasm. The catalysed reaction is L-homoserine + succinyl-CoA = O-succinyl-L-homoserine + CoA. The protein operates within amino-acid biosynthesis; L-methionine biosynthesis via de novo pathway; O-succinyl-L-homoserine from L-homoserine: step 1/1. Its function is as follows. Transfers a succinyl group from succinyl-CoA to L-homoserine, forming succinyl-L-homoserine. The sequence is that of Homoserine O-succinyltransferase from Cronobacter sakazakii (strain ATCC BAA-894) (Enterobacter sakazakii).